A 259-amino-acid polypeptide reads, in one-letter code: Deoxyribose-phosphate aldolase (259 aa).

Aspartate 102 functions as the Proton donor/acceptor in the catalytic mechanism. Lysine 167 (schiff-base intermediate with acetaldehyde) is an active-site residue. Lysine 201 (proton donor/acceptor) is an active-site residue.

The protein belongs to the DeoC/FbaB aldolase family. DeoC type 2 subfamily.

The protein resides in the cytoplasm. The catalysed reaction is 2-deoxy-D-ribose 5-phosphate = D-glyceraldehyde 3-phosphate + acetaldehyde. The protein operates within carbohydrate degradation; 2-deoxy-D-ribose 1-phosphate degradation; D-glyceraldehyde 3-phosphate and acetaldehyde from 2-deoxy-alpha-D-ribose 1-phosphate: step 2/2. Functionally, catalyzes a reversible aldol reaction between acetaldehyde and D-glyceraldehyde 3-phosphate to generate 2-deoxy-D-ribose 5-phosphate. The polypeptide is Deoxyribose-phosphate aldolase (Escherichia coli (strain SMS-3-5 / SECEC)).